Reading from the N-terminus, the 258-residue chain is Acyl-[acyl-carrier-protein]--UDP-N-acetylglucosamine O-acyltransferase (258 aa).

Belongs to the transferase hexapeptide repeat family. LpxA subfamily. In terms of assembly, homotrimer.

The protein localises to the cytoplasm. It carries out the reaction a (3R)-hydroxyacyl-[ACP] + UDP-N-acetyl-alpha-D-glucosamine = a UDP-3-O-[(3R)-3-hydroxyacyl]-N-acetyl-alpha-D-glucosamine + holo-[ACP]. The protein operates within glycolipid biosynthesis; lipid IV(A) biosynthesis; lipid IV(A) from (3R)-3-hydroxytetradecanoyl-[acyl-carrier-protein] and UDP-N-acetyl-alpha-D-glucosamine: step 1/6. Its function is as follows. Involved in the biosynthesis of lipid A, a phosphorylated glycolipid that anchors the lipopolysaccharide to the outer membrane of the cell. The sequence is that of Acyl-[acyl-carrier-protein]--UDP-N-acetylglucosamine O-acyltransferase from Pseudomonas syringae pv. tomato (strain ATCC BAA-871 / DC3000).